The primary structure comprises 456 residues: Non-structural protein V (456 aa).

Positions 53 to 92 (SGESEQVEGGMSKDDGDVERRNLEDLSSTSPTDGTIGKRV) are disordered. Over residues 63–76 (MSKDDGDVERRNLE) the composition is skewed to basic and acidic residues. The residue at position 257 (serine 257) is a Phosphoserine; by host. The segment at 265-324 (ISPEDEEPSSVGGKPNESIGRTIEGQSIRDNLQAKDNKSTDVPGAGPKDSAVKEEPPQKR) is disordered. A Phosphoserine; by host modification is found at serine 350. Residues histidine 408, cysteine 427, cysteine 431, cysteine 443, cysteine 445, cysteine 448, cysteine 452, and cysteine 455 each contribute to the Zn(2+) site.

The protein belongs to the paramyxoviruses V protein family. Interacts with host IFIH1/MDA5, DHX58/LGP2, STAT1 and STAT2. Interacts (via N-terminus) with host UBXN1 (via C-terminal UBX domain); this interaction inhibits interferon-alpha/beta (IFN-alpha/beta) production. Interacts with host RIGI regulatory protein (via CARDs domain) and host TRIM25 (via SPRY domain); these interactions prevent TRIM25-mediated ubiquitination of RIG-I and disrupts downstream RIG-I signaling.

The protein resides in the host cytoplasm. Functionally, plays an essential role in the inhibition of host immune response. Prevents the establishment of cellular antiviral state by blocking interferon-alpha/beta (IFN-alpha/beta) production and signaling pathway. Interacts with host IFIH1/MDA5 and DHX58/LGP2 to inhibit the transduction pathway involved in the activation of IFN-beta promoter, thus protecting the virus against cell antiviral state. Blocks the type I interferon signaling pathway by interacting with host STAT1 and STAT2 and thereby inhibiting their phosphorylation and subsequent nuclear translocation. Efficiently blocks the type II interferon signaling pathway. Suppresses interferon induction by interacting with and stabilizing host UBXN1, a negative regulator of both RIG-I-like receptors (RLR) and NF-kappa-B pathways. Blocks the type I interferon signaling pathway by disrupting the RIG-I signaling pathway. The sequence is that of Non-structural protein V (P/V/C) from Cynopterus brachyotis (Lesser short-nosed fruit bat).